We begin with the raw amino-acid sequence, 488 residues long: Intron-encoded DNA endonuclease I-AniI (488 aa).

The tract at residues 1-169 (MRILKSHPLL…DIVEFIWGGL (169 aa)) is cobA exon 1 encoded. Residues 170 to 488 (YTDEPQCGDV…SEKIKIPSNY (319 aa)) are cobA intron encoded.

It in the C-terminal section; belongs to the LAGLIDADG endonuclease family. As to quaternary structure, homodimer. Requires Mg(2+) as cofactor. The mature protein may arise from proteolytic cleavage of an in-frame translation of cobA exon 1 plus intron, containing the I-AniI open reading frame. Cleavage may take place close to Met-213 resulting in an active endonuclease/maturase of about 30 kDa.

The protein localises to the mitochondrion. Functionally, mitochondrial DNA endonuclease and mRNA maturase involved in intron homing and required for splicing of the cytochrome b (cobA) gene intron, containing its own coding sequence. The protein stimulates the intrinsic ribozyme activity of the intron through binding to and stabilizing specific secondary and tertiary structure elements in the RNA. As an endonuclease it introduces a specific double-strand break at the junction of the two exons the cobA gene and thus mediates the insertion of an intron, containing its own coding sequence (group I intron), into an intronless gene. Recognizes with limited specificity and cleaves the sequence 5'-GAGGAGGTTTCTCTGTA-3'. The proteins RNA and DNA recognition and binding surfaces are independent. In Emericella nidulans (Aspergillus nidulans), this protein is Intron-encoded DNA endonuclease I-AniI (I-AniI).